Reading from the N-terminus, the 305-residue chain is Taste receptor type 2 member 13 (305 aa).

Residues 1 to 7 (MGSNVYG) are Extracellular-facing. Residues 8-28 (ILTMVMIAEFVFGNMSNGFIV) traverse the membrane as a helical segment. Topologically, residues 29–43 (LINCIDWVRKGTLSS) are cytoplasmic. A helical membrane pass occupies residues 44 to 64 (IGWILLFLAISRMVLIWEMLI). Over 65–88 (TWIKYMKYSFSFVTGTELRGIMFT) the chain is Extracellular. Residues 89-109 (WVISNHFSLWLATILSIFYLL) form a helical membrane-spanning segment. At 110-128 (KIASFSKPVFLYLKWREKK) the chain is on the cytoplasmic side. Residues 129 to 149 (VLLIVLLGNLIFLMLNILQIN) traverse the membrane as a helical segment. Topologically, residues 150–182 (KHIEHWMYQYERNITWSSRVSDFAGFSNLVLLE) are extracellular. N-linked (GlcNAc...) asparagine glycosylation occurs at Asn162. Residues 183 to 203 (MIVFSVTPFTVALVSFILLIF) form a helical membrane-spanning segment. Over 204 to 232 (SLWKHLQKMHLNSRGERDPSTKAHVNALR) the chain is Cytoplasmic. A helical transmembrane segment spans residues 233–253 (IMVSFLLLYATYFISFFLSLI). At 254–262 (PMAHKTRLG) the chain is on the extracellular side. Residues 263–283 (LMFSITVGLFYPSSHSFILIL) form a helical membrane-spanning segment. Residues 284–305 (GHSNLRQASLWVMTYLKCGQKH) lie on the Cytoplasmic side of the membrane.

It belongs to the G-protein coupled receptor T2R family.

It localises to the cell membrane. Its function is as follows. Receptor that may play a role in the perception of bitterness and is gustducin-linked. May play a role in sensing the chemical composition of the gastrointestinal content. The activity of this receptor may stimulate alpha gustducin, mediate PLC-beta-2 activation and lead to the gating of TRPM5. This is Taste receptor type 2 member 13 from Mus musculus (Mouse).